We begin with the raw amino-acid sequence, 349 residues long: Isopentenyl-diphosphate delta-isomerase (349 aa).

6–7 is a substrate binding site; that stretch reads RK. Residues 62 to 64, serine 93, and asparagine 122 contribute to the FMN site; that span reads AMT. Glutamine 152 contributes to the substrate binding site. A Mg(2+)-binding site is contributed by glutamate 153. FMN-binding positions include lysine 184, threonine 214, 258 to 259, and 280 to 281; these read GG and AG.

It belongs to the IPP isomerase type 2 family. Homooctamer. Dimer of tetramers. The cofactor is FMN. Requires NADPH as cofactor. Mg(2+) serves as cofactor.

It localises to the cytoplasm. The catalysed reaction is isopentenyl diphosphate = dimethylallyl diphosphate. Functionally, involved in the biosynthesis of isoprenoids. Catalyzes the 1,3-allylic rearrangement of the homoallylic substrate isopentenyl (IPP) to its allylic isomer, dimethylallyl diphosphate (DMAPP). The sequence is that of Isopentenyl-diphosphate delta-isomerase from Bacillus cereus (strain B4264).